We begin with the raw amino-acid sequence, 145 residues long: MKVILLEDIANLGKKNDIVDVSDGYAKNFLIRQKKAVALTSKSQEVLNKDLAILQAQEQQAILDATLLKDELEQKPLHFFLKTNNLQTFGSISNKQIIDEINKDQKLVIKHMITKPHALGIGEHIVEISLHKKVIAKVNVIVSKE.

This sequence belongs to the bacterial ribosomal protein bL9 family.

Functionally, binds to the 23S rRNA. The polypeptide is Large ribosomal subunit protein bL9 (Ureaplasma urealyticum serovar 10 (strain ATCC 33699 / Western)).